The following is a 325-amino-acid chain: Hydroxymethylglutaryl-CoA lyase, mitochondrial (325 aa).

The transit peptide at 1-27 directs the protein to the mitochondrion; it reads MASVRKAFPRRLVGLTSLRAVSTSSMG. In terms of domain architecture, Pyruvate carboxyltransferase spans 33 to 300; the sequence is VKIVEVGPRD…HTGVNLQKLL (268 aa). Arg41 serves as a coordination point for substrate. Asp42 lines the a divalent metal cation pocket. An N6-acetyllysine; alternate modification is found at Lys48. At Lys48 the chain carries N6-succinyllysine; alternate. Lys111 carries the N6-acetyllysine modification. N6-acetyllysine; alternate occurs at positions 137 and 179. An N6-succinyllysine; alternate mark is found at Lys137 and Lys179. His233 and His235 together coordinate a divalent metal cation. Residue Cys266 is part of the active site. Position 275 (Asn275) interacts with a divalent metal cation. The short motif at 323 to 325 is the Microbody targeting signal element; sequence CKL. Position 324 is an N6-acetyllysine (Lys324).

This sequence belongs to the HMG-CoA lyase family. As to quaternary structure, homodimer; disulfide-linked. Can also form homotetramers.

The protein localises to the mitochondrion matrix. It localises to the peroxisome. It catalyses the reaction (3S)-3-hydroxy-3-methylglutaryl-CoA = acetoacetate + acetyl-CoA. It participates in metabolic intermediate metabolism; (S)-3-hydroxy-3-methylglutaryl-CoA degradation; acetoacetate from (S)-3-hydroxy-3-methylglutaryl-CoA: step 1/1. Mitochondrial 3-hydroxy-3-methylglutaryl-CoA lyase that catalyzes a cation-dependent cleavage of (S)-3-hydroxy-3-methylglutaryl-CoA into acetyl-CoA and acetoacetate, a key step in ketogenesis. Terminal step in leucine catabolism. Ketone bodies (beta-hydroxybutyrate, acetoacetate and acetone) are essential as an alternative source of energy to glucose, as lipid precursors and as regulators of metabolism. This Mus musculus (Mouse) protein is Hydroxymethylglutaryl-CoA lyase, mitochondrial (Hmgcl).